A 385-amino-acid polypeptide reads, in one-letter code: Ribosomal RNA large subunit methyltransferase G (385 aa).

It belongs to the methyltransferase superfamily. RlmG family.

Its subcellular location is the cytoplasm. The catalysed reaction is guanosine(1835) in 23S rRNA + S-adenosyl-L-methionine = N(2)-methylguanosine(1835) in 23S rRNA + S-adenosyl-L-homocysteine + H(+). In terms of biological role, specifically methylates the guanine in position 1835 (m2G1835) of 23S rRNA. The sequence is that of Ribosomal RNA large subunit methyltransferase G from Vibrio parahaemolyticus serotype O3:K6 (strain RIMD 2210633).